We begin with the raw amino-acid sequence, 202 residues long: uncharacterized protein (202 aa).

Disordered stretches follow at residues 1 to 32 and 46 to 95; these read MRPE…ASLG and PSSV…PSYT. The segment covering 47–79 has biased composition (low complexity); the sequence is SSVSLSSSSSRRSMPSLGSSRSSSLPSTGSLRS.

This is an uncharacterized protein from Equus caballus (Horse).